A 124-amino-acid polypeptide reads, in one-letter code: Small ribosomal subunit protein uS12 (124 aa).

Aspartate 89 is subject to 3-methylthioaspartic acid.

Belongs to the universal ribosomal protein uS12 family. In terms of assembly, part of the 30S ribosomal subunit. Contacts proteins S8 and S17. May interact with IF1 in the 30S initiation complex.

With S4 and S5 plays an important role in translational accuracy. Its function is as follows. Interacts with and stabilizes bases of the 16S rRNA that are involved in tRNA selection in the A site and with the mRNA backbone. Located at the interface of the 30S and 50S subunits, it traverses the body of the 30S subunit contacting proteins on the other side and probably holding the rRNA structure together. The combined cluster of proteins S8, S12 and S17 appears to hold together the shoulder and platform of the 30S subunit. The polypeptide is Small ribosomal subunit protein uS12 (Shewanella baltica (strain OS223)).